The primary structure comprises 219 residues: Casparian strip membrane protein 3 (219 aa).

The segment at methionine 1 to serine 43 is disordered. The Cytoplasmic portion of the chain corresponds to methionine 1–glycine 57. A helical membrane pass occupies residues isoleucine 58–isoleucine 78. Topologically, residues leucine 79–leucine 108 are extracellular. A helical membrane pass occupies residues phenylalanine 109 to valine 129. Residues cysteine 130–aspartate 147 are Cytoplasmic-facing. The helical transmembrane segment at leucine 148 to alanine 168 threads the bilayer. Topologically, residues histidine 169 to glutamate 193 are extracellular. N-linked (GlcNAc...) asparagine glycosylation occurs at asparagine 170. Residues alanine 194–leucine 214 form a helical membrane-spanning segment. The Cytoplasmic portion of the chain corresponds to alanine 215–threonine 219.

Belongs to the Casparian strip membrane proteins (CASP) family. In terms of assembly, homodimer and heterodimers.

The protein resides in the cell membrane. Functionally, regulates membrane-cell wall junctions and localized cell wall deposition. Required for establishment of the Casparian strip membrane domain (CSD) and the subsequent formation of Casparian strips, a cell wall modification of the root endodermis that determines an apoplastic barrier between the intraorganismal apoplasm and the extraorganismal apoplasm and prevents lateral diffusion. The protein is Casparian strip membrane protein 3 of Lotus japonicus (Lotus corniculatus var. japonicus).